The following is a 132-amino-acid chain: Rubredoxin-1 (132 aa).

A Rubredoxin-like domain is found at 1-53 (MSRYQCPDCQYIYDENKGEPHEGFHPNTSWNDIPKDWACPDCAVRDKVDFIFL). Residues C6, C9, C39, and C42 each coordinate Fe cation. A disordered region spans residues 108 to 132 (TEVLDQASTPQVVRKSSTRKKMRNK). Residues 113–122 (QASTPQVVRK) show a composition bias toward polar residues. Basic residues predominate over residues 123–132 (SSTRKKMRNK).

Belongs to the rubredoxin family. It depends on Fe(3+) as a cofactor.

The protein resides in the cytoplasm. It participates in hydrocarbon metabolism; alkane degradation. In terms of biological role, not known. Probably involved in an electron transport pathway, but not required for the hydrocarbon hydroxylating system. Seems to be non-functional. In Ectopseudomonas oleovorans (Pseudomonas oleovorans), this protein is Rubredoxin-1 (alkF).